The sequence spans 379 residues: Zinc metalloproteinase nas-20 (379 aa).

An N-terminal signal peptide occupies residues 1–20 (MKITVNFLLVALIGVPSVLS). A propeptide spanning residues 21–29 (DRHITRDKR) is cleaved from the precursor. A Peptidase M12A domain is found at 30 to 208 (QAMRDYAKWE…VLLNKFYGCN (179 aa)). A glycan (N-linked (GlcNAc...) asparagine) is linked at asparagine 67. Cystine bridges form between cysteine 70-cysteine 207, cysteine 91-cysteine 111, cysteine 209-cysteine 229, and cysteine 234-cysteine 243. Histidine 119 is a binding site for Zn(2+). The active site involves glutamate 120. Positions 123 and 129 each coordinate Zn(2+). A glycan (N-linked (GlcNAc...) asparagine) is linked at asparagine 185. The 42-residue stretch at 203–244 (KFYGCNCDNHPRKLDCKNGGYQNPANCEECLCTDGFNGQLCD) folds into the EGF-like domain. N-linked (GlcNAc...) asparagine glycosylation is found at asparagine 337 and asparagine 370.

Zn(2+) is required as a cofactor.

It is found in the secreted. Its function is as follows. Metalloprotease. In Caenorhabditis elegans, this protein is Zinc metalloproteinase nas-20 (nas-20).